Here is a 301-residue protein sequence, read N- to C-terminus: MFGWHWLLEWQTPYEFHGHLIEKVLAEEKTPYQHVTLVEFTRFGKGLIIDGKVQSTLYDEHIYHELLVHPLLLSLTKPPKSVLILGGGEGATLREVLKYKSVEKAVMVDIDEKVIEFAKKYLYEWHQGAFEDKRTNLVITDGLKFIKETKEKYDAIILDLTDPIKNSTSYMLYTKEFYEKLREILNERGGIVTQATSPSFSLEVYVTIYNTIKEVFKEASASYTYMASFDGLWGFVYGGVRPDLLSEDEVDSKINERIDGQLRFYDGYSHKISFSLPKNIKSEFQKITKISTEKDPIYVPA.

The region spanning 4–240 (WHWLLEWQTP…GLWGFVYGGV (237 aa)) is the PABS domain. An S-methyl-5'-thioadenosine-binding site is contributed by Gln-33. Positions 64 and 89 each coordinate spermidine. S-methyl-5'-thioadenosine contacts are provided by residues Asp-109 and 141–142 (DG). Asp-159 functions as the Proton acceptor in the catalytic mechanism.

The protein belongs to the spermidine/spermine synthase family. In terms of assembly, homotrimer.

Its subcellular location is the cytoplasm. The catalysed reaction is S-adenosyl 3-(methylsulfanyl)propylamine + putrescine = S-methyl-5'-thioadenosine + spermidine + H(+). The enzyme catalyses S-adenosyl 3-(methylsulfanyl)propylamine + propane-1,3-diamine = norspermidine + S-methyl-5'-thioadenosine + H(+). It carries out the reaction norspermidine + S-adenosyl 3-(methylsulfanyl)propylamine = norspermine + S-methyl-5'-thioadenosine + H(+). It catalyses the reaction S-adenosyl 3-(methylsulfanyl)propylamine + spermidine = thermospermine + S-methyl-5'-thioadenosine + H(+). Its pathway is amine and polyamine biosynthesis; spermidine biosynthesis; spermidine from putrescine: step 1/1. Competitively inhibited by 5-methylthioadenosine, 5-methylthiotubercidin, S-adenosyl(5)-3-thiopropylamine and S-adenosyl-3-thio-l,8-diaminooctane. In terms of biological role, involved in the biosynthesis of polyamines which are thought to support the growth of thermophilic microorganisms under high-temperature conditions. It seems that long-chain and branched-chain of polyamines effectively stabilize DNA and RNA, respectively. Catalyzes the irreversible transfer of a propylamine group from the amino donor S-adenosylmethioninamine (decarboxy-AdoMet) to various amine acceptors such as putrescine (1,4-diaminobutane), 1,3-diaminopropane, sym-norspermidine and spermidine. The biosynthesis of caldopentamine from norspermine has been also observed, but with a very low activity. The reaction involves a nucleophilic attack on the C-3 methylene of the propylamine moiety adjacent to the positively charged sulfur of decarboxy-AdoMet. S-adenosylmethioninamine is the only amino donor. This chain is Polyamine aminopropyltransferase, found in Saccharolobus solfataricus (strain ATCC 35092 / DSM 1617 / JCM 11322 / P2) (Sulfolobus solfataricus).